The sequence spans 210 residues: Late histone H1 (210 aa).

2 disordered regions span residues 1–21 and 86–210; these read MSAA…HPPT and SFKL…AAKK. Positions 17–91 constitute an H15 domain; sequence AHPPTSQMVV…GASGSFKLGK (75 aa). Residues 104 to 113 show a composition bias toward basic residues; that stretch reads AAAKKAKLAA. Residues 114–123 show a composition bias toward basic and acidic residues; sequence KKKEQKEKKA. Positions 124-210 are enriched in basic residues; it reads AKTKARKEKL…KPAAKKAAKK (87 aa).

The protein belongs to the histone H1/H5 family.

The protein resides in the nucleus. The protein localises to the chromosome. In terms of biological role, histones H1 are necessary for the condensation of nucleosome chains into higher-order structures. The chain is Late histone H1 from Lytechinus pictus (Painted sea urchin).